A 307-amino-acid polypeptide reads, in one-letter code: Solute carrier family 25 member 53 (307 aa).

Positions 1 to 23 (MGEQNHSPGKELQHRTRAEAPGK) are disordered. Over residues 8 to 22 (PGKELQHRTRAEAPG) the composition is skewed to basic and acidic residues. Solcar repeat units follow at residues 25 to 105 (SWHS…LLCF), 112 to 202 (HTLG…IQDG), and 210 to 302 (HWVP…HSRK). 6 helical membrane passes run 31–51 (YALGAVSNFMSTFLTFPIYKV), 82–102 (YPPLLSKTLQGTLLFGTYDSL), 112–132 (HTLGHRWAAGLMSGVVEAVAL), 181–201 (VLARNSLGSALYFSFKDPIQD), 215–235 (LVSGSVNGTITCLVLYPLIVL), and 269–290 (IYRGGSLVILRSSVTWGLTTAI).

This sequence belongs to the mitochondrial carrier (TC 2.A.29) family.

It is found in the mitochondrion inner membrane. The polypeptide is Solute carrier family 25 member 53 (SLC25A53) (Homo sapiens (Human)).